Here is a 70-residue protein sequence, read N- to C-terminus: MSERIKQLMVKRGITIEELSRETMIDMQTLNKIIEMPDESDVTTIKLIALVLNVSIDELLDEKGGEDNAK.

Residues 5 to 59 (IKQLMVKRGITIEELSRETMIDMQTLNKIIEMPDESDVTTIKLIALVLNVSIDEL) enclose the HTH cro/C1-type domain. Residues 16-35 (IEELSRETMIDMQTLNKIIE) constitute a DNA-binding region (H-T-H motif).

This is SPbeta prophage-derived uncharacterized HTH-type transcriptional regulator YopO (yopO) from Bacillus subtilis (strain 168).